Here is a 702-residue protein sequence, read N- to C-terminus: Polyribonucleotide nucleotidyltransferase (702 aa).

2 residues coordinate Mg(2+): aspartate 487 and aspartate 493. Residues 554-613 (PRLLTIKIHPDKIREVIGKGGSTIQAITKETGTQIDIQDDGTIVIASVNAIAAQAAKARI) enclose the KH domain. Positions 623–691 (GRIYEGKVAK…KQGRIRLSMK (69 aa)) constitute an S1 motif domain.

Belongs to the polyribonucleotide nucleotidyltransferase family. In terms of assembly, component of the RNA degradosome, which is a multiprotein complex involved in RNA processing and mRNA degradation. Mg(2+) serves as cofactor.

The protein resides in the cytoplasm. It catalyses the reaction RNA(n+1) + phosphate = RNA(n) + a ribonucleoside 5'-diphosphate. In terms of biological role, involved in mRNA degradation. Catalyzes the phosphorolysis of single-stranded polyribonucleotides processively in the 3'- to 5'-direction. This chain is Polyribonucleotide nucleotidyltransferase, found in Stenotrophomonas maltophilia (strain K279a).